The primary structure comprises 356 residues: Peptide chain release factor 1 (356 aa).

Q234 is modified (N5-methylglutamine).

It belongs to the prokaryotic/mitochondrial release factor family. Methylated by PrmC. Methylation increases the termination efficiency of RF1.

It localises to the cytoplasm. Peptide chain release factor 1 directs the termination of translation in response to the peptide chain termination codons UAG and UAA. In Exiguobacterium sp. (strain ATCC BAA-1283 / AT1b), this protein is Peptide chain release factor 1.